Reading from the N-terminus, the 239-residue chain is MKYYDILNSACNDVGIGFDENKYNAFIKYKSMIQEWNKKINLTAITEDEDIIKKHFIDCIKIYKFDKFKKLNKIMDVGTGAGFPGIPIKILEEEKEVILLDSLNKRIKFLDEVSKELKLENIKNLHGRAEDYAQKEEFREQFDGVVSRAVANISVLSEFCLPYIRVGGYFIAMKGPNVSEEIDEGKKAIELLGGKLQEIIQVEVEESDLKHNLVIIEKIKNTPNKYPRKAGMVTKKPLK.

S-adenosyl-L-methionine-binding positions include glycine 78, phenylalanine 83, 129 to 130 (AE), and arginine 148.

The protein belongs to the methyltransferase superfamily. RNA methyltransferase RsmG family.

The protein resides in the cytoplasm. Its function is as follows. Specifically methylates the N7 position of a guanine in 16S rRNA. In Clostridium tetani (strain Massachusetts / E88), this protein is Ribosomal RNA small subunit methyltransferase G.